A 743-amino-acid chain; its full sequence is Acetyl-coenzyme A synthetase, chloroplastic/glyoxysomal (743 aa).

The N-terminal 84 residues, 1–84, are a transit peptide targeting the chloroplast; that stretch reads MKIGSPSSPI…LNAVVLGESL (84 aa). Residue Asp613 is part of the active site.

The protein belongs to the ATP-dependent AMP-binding enzyme family. In terms of tissue distribution, expressed in leaves, flower buds and young flowers.

The protein resides in the plastid. It localises to the chloroplast. Its subcellular location is the glyoxysome. The catalysed reaction is acetate + ATP + CoA = acetyl-CoA + AMP + diphosphate. In terms of biological role, catalyzes the production of acetyl-CoA, an activated form of acetate that can be used for lipid synthesis or for energy generation. May play a limited role in the biosynthesis of lipids. This Arabidopsis thaliana (Mouse-ear cress) protein is Acetyl-coenzyme A synthetase, chloroplastic/glyoxysomal (ACS).